Here is a 177-residue protein sequence, read N- to C-terminus: Large ribosomal subunit protein uL6 (177 aa).

It belongs to the universal ribosomal protein uL6 family. As to quaternary structure, part of the 50S ribosomal subunit.

In terms of biological role, this protein binds to the 23S rRNA, and is important in its secondary structure. It is located near the subunit interface in the base of the L7/L12 stalk, and near the tRNA binding site of the peptidyltransferase center. This is Large ribosomal subunit protein uL6 from Aeromonas hydrophila subsp. hydrophila (strain ATCC 7966 / DSM 30187 / BCRC 13018 / CCUG 14551 / JCM 1027 / KCTC 2358 / NCIMB 9240 / NCTC 8049).